The chain runs to 777 residues: Acyl-CoA dehydrogenase family member 11 (777 aa).

FAD-binding positions include 501–511 (FCMTEPDVASS), 509–511 (ASS), 535–537 (WSS), and Ser537. Ser511 contacts substrate. 626–629 (GPGR) contributes to the substrate binding site. Residues Arg654, Gln724, and 724 to 728 (QVCGG) each bind FAD. Gly752 is a binding site for substrate. FAD is bound by residues 753–755 (PDE) and Glu755.

It belongs to the acyl-CoA dehydrogenase family. As to quaternary structure, homodimer. FAD serves as cofactor.

Its subcellular location is the peroxisome. The protein localises to the mitochondrion membrane. It carries out the reaction a 2,3-saturated acyl-CoA + oxidized [electron-transfer flavoprotein] + H(+) = a (2E)-enoyl-CoA + reduced [electron-transfer flavoprotein]. It catalyses the reaction docosanoyl-CoA + oxidized [electron-transfer flavoprotein] + H(+) = (2E)-docosenoyl-CoA + reduced [electron-transfer flavoprotein]. The catalysed reaction is tetracosanoyl-CoA + oxidized [electron-transfer flavoprotein] + H(+) = (2E)-tetracosenoyl-CoA + reduced [electron-transfer flavoprotein]. The enzyme catalyses eicosanoyl-CoA + oxidized [electron-transfer flavoprotein] + H(+) = (2E)-eicosenoyl-CoA + reduced [electron-transfer flavoprotein]. It carries out the reaction hexacosanoyl-CoA + oxidized [electron-transfer flavoprotein] + H(+) = (2E)-hexacosenoyl-CoA + reduced [electron-transfer flavoprotein]. It catalyses the reaction tricosanoyl-CoA + oxidized [electron-transfer flavoprotein] + H(+) = (2E)-tricosenoyl-CoA + reduced [electron-transfer flavoprotein]. The protein operates within lipid metabolism; fatty acid beta-oxidation. Functionally, acyl-CoA dehydrogenase, that exhibits maximal activity towards saturated C22-CoA. Probably participates in beta-oxydation and energy production but could also play a role in the metabolism of specific fatty acids to control fatty acids composition of cellular lipids in brain. The chain is Acyl-CoA dehydrogenase family member 11 (ACAD11) from Gallus gallus (Chicken).